The sequence spans 409 residues: Potassium channel subfamily K member 3 (409 aa).

The Cytoplasmic segment spans residues 1–8 (MKRQNVRT). A helical membrane pass occupies residues 9–29 (LALIVCTFTYLLVGAAVFDAL). N53 carries N-linked (GlcNAc...) asparagine glycosylation. The pore-forming intramembrane region spans 78–101 (WRFAGSFYFAITVITTIGYGHAAP). Residues 108-128 (VFCMFYALLGIPLTLVMFQSL) form a helical membrane-spanning segment. At 129-158 (GERINTFVRYLLHRAKRGLGMRHAEVSMAN) the chain is on the cytoplasmic side. The helical transmembrane segment at 159–179 (MVLIGFVSCISTLCIGAAAFS) threads the bilayer. Residues 184-207 (WTFFQAYYYCFITLTTIGFGDYVA) constitute an intramembrane region (pore-forming). The helical transmembrane segment at 223 to 243 (FSFVYILTGLTVIGAFLNLVV) threads the bilayer. The Cytoplasmic segment spans residues 244 to 409 (LRFMTMNAED…RGLMKRRSSV (166 aa)).

It belongs to the two pore domain potassium channel (TC 1.A.1.8) family. Homodimer. Heterodimer with KCNK1. Heterodimer with KCNK9. As to expression, very strong expression in heart, also detected in kidney, brain, skin, testis, lung, skeletal muscle, small intestine and stomach. Not detected in liver, thymus or spleen. Expressed in adrenal glands mainly in zona glomerulosa and zona fasciculata of the cortex. Expressed at higher levels in brown and beige than in white adipocytes.

It is found in the cell membrane. It catalyses the reaction K(+)(in) = K(+)(out). The enzyme catalyses Na(+)(in) = Na(+)(out). With respect to regulation, activated by halothane and isoflurane. Inhibited by external acidification, diacylglycerol and anandamide. Inactivated by barium. Its function is as follows. K(+) channel that conducts voltage-dependent outward rectifying currents upon membrane depolarization. Voltage sensing is coupled to K(+) electrochemical gradient in an 'ion flux gating' mode where outward but not inward ion flow opens the gate. Changes ion selectivity and becomes permeable to Na(+) ions in response to extracellular acidification. Protonation of the pH sensor His-98 stabilizes C-type inactivation conformation likely converting the channel from outward K(+)-conducting, to inward Na(+)-conducting to nonconductive state. Homo- and heterodimerizes to form functional channels with distinct regulatory and gating properties. Allows K(+) currents with fast-gating kinetics important for the repolarization and hyperpolarization phases of action potentials. In cerebellar granule cells, heteromeric KCNK3:KCNK9 channel may hyperpolarize the resting membrane potential to limit intrinsic neuronal excitability, but once the action potential threshold is reached, it may support high-frequency action potential firing and increased neuronal excitability. Dispensable for central chemosensory respiration i.e. breathing controlled by brainstem CO2/pH, it rather conducts pH-sensitive currents and controls the firing rate of serotonergic raphe neurons involved in potentiation of the respiratory chemoreflex. Additionally, imparts chemosensitivity to type 1 cells in carotid bodies which respond to a decrease in arterial oxygen pressure or an increase in carbon dioxide pressure or pH to initiate adaptive changes in pulmonary ventilation. In adrenal gland, contributes to the maintenance of a hyperpolarized resting membrane potential of aldosterone-producing cells at zona glomerulosa and limits aldosterone release as part of a regulatory mechanism that controls arterial blood pressure and electrolyte homeostasis. In brown adipocytes, mediates K(+) efflux that counteracts norepinephrine-induced membrane depolarization, limits Ca(2+) efflux and downstream cAMP and PKA signaling, ultimately attenuating lipid oxidation and adaptive thermogenesis. The chain is Potassium channel subfamily K member 3 from Mus musculus (Mouse).